The sequence spans 3432 residues: Genome polyprotein (3432 aa).

An interaction with host EXOC1 region spans residues 2–15; sequence TKKPGGPGKNRAIN. The Cytoplasmic portion of the chain corresponds to 2 to 109; the sequence is TKKPGGPGKN…KKQNKRGGNE (108 aa). Residues 37 to 72 form a hydrophobic; homodimerization of capsid protein C region; it reads LLDGRGPVRFVLALITFFKFTALAPTKALLGRWRAV. The propeptide at 106-127 is ER anchor for the capsid protein C, removed in mature form by serine protease NS3; it reads GGNESSIMWLASLAIVIACAGA. The chain crosses the membrane as a helical span at residues 110–130; it reads SSIMWLASLAIVIACAGAMKL. Residues 131 to 253 lie on the Extracellular side of the membrane; sequence SNFQGKLLMT…ATRYLMKTEN (123 aa). Residue asparagine 142 is glycosylated (N-linked (GlcNAc...) asparagine; by host). The chain crosses the membrane as a helical span at residues 254–274; it reads WIIRNPGYAFLAAALGWMLGS. The Cytoplasmic segment spans residues 275-279; that stretch reads NSGQR. The chain crosses the membrane as a helical span at residues 280–294; that stretch reads VVFTILLLLVAPAYS. Topologically, residues 295 to 746 are extracellular; sequence FNCLGMGNRD…QVFGGAFRTL (452 aa). 6 disulfides stabilise this stretch: cysteine 297–cysteine 324, cysteine 354–cysteine 410, cysteine 354–cysteine 415, cysteine 368–cysteine 399, cysteine 386–cysteine 410, and cysteine 386–cysteine 415. The fusion peptide stretch occupies residues 392-405; sequence DRGWGNGCGLFGKG. Residue asparagine 448 is glycosylated (N-linked (GlcNAc...) asparagine; by host). 2 disulfide bridges follow: cysteine 484-cysteine 581 and cysteine 598-cysteine 629. Residues 747-767 traverse the membrane as a helical segment; it reads FGGMSWITQGLMGALLLWMGV. Residues 768 to 773 lie on the Cytoplasmic side of the membrane; the sequence is NARDRS. The helical transmembrane segment at 774–794 threads the bilayer; sequence IALAFLATGGVLVFLATNVHA. Over 795–1219 the chain is Extracellular; it reads DTGCAIDITR…AFAEANSGGD (425 aa). Cystine bridges form between cysteine 798/cysteine 809, cysteine 849/cysteine 937, cysteine 973/cysteine 1017, cysteine 1074/cysteine 1123, cysteine 1085/cysteine 1106, and cysteine 1107/cysteine 1110. 2 N-linked (GlcNAc...) asparagine; by host glycosylation sites follow: asparagine 924 and asparagine 1001. A helical membrane pass occupies residues 1220–1240; sequence VLHLALIAVFKIQPAFLVMNM. Topologically, residues 1241–1250 are cytoplasmic; it reads LSARWTNQEN. Residues 1251–1271 traverse the membrane as a helical segment; sequence MVLVLGAAFFQLASVDLQIGV. A topological domain (lumenal) is located at residue histidine 1272. Residues 1273–1293 traverse the membrane as a helical segment; that stretch reads GILNAAAIAWMIVRAITFPTT. Residues 1294–1309 lie on the Cytoplasmic side of the membrane; that stretch reads STVAMPVLALLTPGMR. The chain crosses the membrane as a helical span at residues 1310 to 1330; it reads ALYLDTYRIILLVIGICSLLQ. At 1331-1341 the chain is on the lumenal side; it reads ERRKTMAKKKG. The helical transmembrane segment at 1342–1362 threads the bilayer; that stretch reads AVLLGLALTSTGWFSPTTIAA. At 1363–1374 the chain is on the cytoplasmic side; that stretch reads GLMVCNPNKKRG. Residues 1375 to 1395 form a helical membrane-spanning segment; it reads WPATEFLSAVGLMFAIVGGLA. Topologically, residues 1396–1398 are lumenal; the sequence is ELD. A helical transmembrane segment spans residues 1399–1419; the sequence is IESMSIPFMLAGLMAVSYVIS. The Cytoplasmic segment spans residues 1420 to 1476; the sequence is GKATDMWLDRAADISWEMEAAITGSSRRLDVKLDDDGDFHLIDDPGVPWKVWLLRMS. The segment at 1427–1466 is interacts with and activates NS3 protease; it reads LDRAADISWEMEAAITGSSRRLDVKLDDDGDFHLIDDPGV. The segment at residues 1477-1497 is an intramembrane region (helical); that stretch reads CIGLAALTPWAIVPAAFGYWL. The Cytoplasmic portion of the chain corresponds to 1498-2173; sequence TLKTTKRGGV…RMALEELPDA (676 aa). The 178-residue stretch at 1505-1682 folds into the Peptidase S7 domain; the sequence is GGVFWDTPSP…DRQEEPVPDA (178 aa). Active-site charge relay system; for serine protease NS3 activity residues include histidine 1555, aspartate 1579, and serine 1639. One can recognise a Helicase ATP-binding domain in the interval 1685 to 1841; that stretch reads PSMLKKRQMT…DSNAPIHDLQ (157 aa). The tract at residues 1689-1692 is important for RNA-binding; the sequence is KKRQ. An ATP-binding site is contributed by 1698 to 1705; that stretch reads LHPGSGKT. The short motif at 1789-1792 is the DEAH box element; the sequence is DEAH. The 166-residue stretch at 1852–2017 folds into the Helicase C-terminal domain; that stretch reads GYEWITEYAG…GLVAQLYGPE (166 aa). Lysine 1893 is modified (N6-acetyllysine; by host). A disordered region spans residues 1950–1969; it reads NPSPITSASAAQRRGRVGRN. Residues 2168–2172 form a regulates the ATPase activity of NS3 helicase region; that stretch reads EELPD. Residues 2174–2194 form a helical membrane-spanning segment; sequence LETITLIVAITVMTGGFFLLM. The Lumenal segment spans residues 2195 to 2199; the sequence is MQRKG. Positions 2200-2220 form an intramembrane region, helical; sequence IGKMGLGALVLTLATFFLWAA. A topological domain (lumenal) is located at residue glutamate 2221. Residues 2222–2242 form a helical membrane-spanning segment; it reads VPGTKIAGTLLVALLLMVVLI. Residues 2243–2257 are Cytoplasmic-facing; sequence PEPEKQRSQTDNQLA. The chain crosses the membrane as a helical span at residues 2258-2278; sequence VFLICVLTVVGVVAANEYGML. Residues 2279 to 2311 lie on the Lumenal side of the membrane; that stretch reads EKTKADLKSMFGGRTQAPGLTGLPSMALDLRPA. Residues 2312–2332 constitute an intramembrane region (helical); sequence TAWALYGGSTVVLTPLLKHLI. Residues 2333–2368 are Lumenal-facing; the sequence is TSEYVTTSLASISSQAGSLFVLPRGVPFTDLDLTVG. Residues 2369 to 2389 form a helical membrane-spanning segment; the sequence is LVFLGCWGQITLTTFLTAMVL. Residues 2390 to 2444 lie on the Cytoplasmic side of the membrane; sequence VTLHYGYMLPGWQAEALRAAQRRTAAGIMKNAVVDGMVATDVPELERTTPLMQKK. The chain crosses the membrane as a helical span at residues 2445-2465; that stretch reads VGQVLLIGVSVAAFLVNPNVT. The Lumenal segment spans residues 2466-2469; that stretch reads TVRE. The chain crosses the membrane as a helical span at residues 2470–2490; it reads AGVLVTAATLTLWDNGASAVW. At 2491–3432 the chain is on the cytoplasmic side; it reads NSTTATGLCH…DVLIQEDRVI (942 aa). Residues 2528–2793 enclose the mRNA cap 0-1 NS5-type MT domain; the sequence is GRPGGRTLGE…DVNLGSGTRA (266 aa). Serine 2583 lines the S-adenosyl-L-methionine pocket. Serine 2583 bears the Phosphoserine mark. Residue lysine 2588 is the For 2'-O-MTase activity of the active site. S-adenosyl-L-methionine-binding residues include glycine 2613, tryptophan 2614, threonine 2631, lysine 2632, aspartate 2658, and valine 2659. Aspartate 2673 acts as the For 2'-O-MTase activity in catalysis. Isoleucine 2674 is an S-adenosyl-L-methionine binding site. Catalysis depends on for 2'-O-MTase activity residues lysine 2709 and glutamate 2745. Tyrosine 2747 contributes to the S-adenosyl-L-methionine binding site. Residues glutamate 2967, histidine 2971, cysteine 2976, and cysteine 2979 each coordinate Zn(2+). Residues 3057 to 3209 enclose the RdRp catalytic domain; that stretch reads GKMYADDTAG…KPLDDRFATA (153 aa). 3 residues coordinate Zn(2+): histidine 3244, cysteine 3260, and cysteine 3379.

The protein in the N-terminal section; belongs to the class I-like SAM-binding methyltransferase superfamily. mRNA cap 0-1 NS5-type methyltransferase family. Homodimer. Interacts (via N-terminus) with host EXOC1 (via C-terminus); this interaction results in EXOC1 degradation through the proteasome degradation pathway. In terms of assembly, forms heterodimers with envelope protein E in the endoplasmic reticulum and Golgi. As to quaternary structure, homodimer; in the endoplasmic reticulum and Golgi. Interacts with protein prM. Interacts with non-structural protein 1. Interacts with host HSPA5. Homodimer; Homohexamer when secreted. Interacts with envelope protein E. NS1 interacts with NS4B. Interacts with host complement protein CFH; this interaction leads to the degradation of C3. In terms of assembly, interacts (via N-terminus) with serine protease NS3. As to quaternary structure, forms a heterodimer with serine protease NS3. May form homooligomers. Forms a heterodimer with NS2B. Interacts with non-structural protein 2A (via N-terminus). Interacts with NS4B. Interacts with unphosphorylated RNA-directed RNA polymerase NS5; this interaction stimulates RNA-directed RNA polymerase NS5 guanylyltransferase activity. Interacts with host ILF2. In terms of assembly, interacts with serine protease NS3. As to quaternary structure, homodimer. Interacts with host STAT2; this interaction inhibits the phosphorylation of the latter, and, when all viral proteins are present (polyprotein), targets STAT2 for degradation. Interacts with serine protease NS3. Mn(2+) is required as a cofactor. Requires Mg(2+) as cofactor. Post-translationally, specific enzymatic cleavages in vivo yield mature proteins. Cleavages in the lumen of endoplasmic reticulum are performed by host signal peptidase, whereas cleavages in the cytoplasmic side are performed by serine protease NS3. Signal cleavage at the 2K-4B site requires a prior NS3 protease-mediated cleavage at the 4A-2K site. In terms of processing, cleaved in post-Golgi vesicles by a host furin, releasing the mature small envelope protein M, and peptide pr. This cleavage is incomplete as up to 30% of viral particles still carry uncleaved prM. N-glycosylated. Post-translationally, N-glycosylated. The excreted form is glycosylated and this is required for efficient secretion of the protein from infected cells. In terms of processing, acetylated by host KAT5. Acetylation modulates NS3 RNA-binding and unwinding activities and plays an important positive role for viral replication. Phosphorylated on serines residues. This phosphorylation may trigger NS5 nuclear localization.

It is found in the host endoplasmic reticulum membrane. The protein resides in the virion. The protein localises to the host nucleus. It localises to the host cytoplasm. Its subcellular location is the host perinuclear region. It is found in the secreted. The protein resides in the virion membrane. The protein localises to the host cell surface. It carries out the reaction Selective hydrolysis of -Xaa-Xaa-|-Yaa- bonds in which each of the Xaa can be either Arg or Lys and Yaa can be either Ser or Ala.. It catalyses the reaction a ribonucleoside 5'-triphosphate + H2O = a ribonucleoside 5'-diphosphate + phosphate + H(+). The catalysed reaction is RNA(n) + a ribonucleoside 5'-triphosphate = RNA(n+1) + diphosphate. The enzyme catalyses ATP + H2O = ADP + phosphate + H(+). It carries out the reaction a 5'-end (5'-triphosphoguanosine)-ribonucleoside in mRNA + S-adenosyl-L-methionine = a 5'-end (N(7)-methyl 5'-triphosphoguanosine)-ribonucleoside in mRNA + S-adenosyl-L-homocysteine. It catalyses the reaction a 5'-end (N(7)-methyl 5'-triphosphoguanosine)-ribonucleoside in mRNA + S-adenosyl-L-methionine = a 5'-end (N(7)-methyl 5'-triphosphoguanosine)-(2'-O-methyl-ribonucleoside) in mRNA + S-adenosyl-L-homocysteine + H(+). Functionally, plays a role in virus budding by binding to the cell membrane and gathering the viral RNA into a nucleocapsid that forms the core of a mature virus particle. During virus entry, may induce genome penetration into the host cytoplasm after hemifusion induced by the surface proteins. Can migrate to the cell nucleus where it modulates host functions. Overcomes the anti-viral effects of host EXOC1 by sequestering and degrading the latter through the proteasome degradation pathway. Inhibits RNA silencing by interfering with host Dicer. Its function is as follows. Prevents premature fusion activity of envelope proteins in trans-Golgi by binding to envelope protein E at pH6.0. After virion release in extracellular space, gets dissociated from E dimers. In terms of biological role, acts as a chaperone for envelope protein E during intracellular virion assembly by masking and inactivating envelope protein E fusion peptide. prM is the only viral peptide matured by host furin in the trans-Golgi network probably to avoid catastrophic activation of the viral fusion activity in acidic Golgi compartment prior to virion release. prM-E cleavage is inefficient, and many virions are only partially matured. These uncleaved prM would play a role in immune evasion. Functionally, may play a role in virus budding. Exerts cytotoxic effects by activating a mitochondrial apoptotic pathway through M ectodomain. May display a viroporin activity. Binds to host cell surface receptor and mediates fusion between viral and cellular membranes. Efficient virus attachment to cell is, at least in part, mediated by host HSPA5. Envelope protein is synthesized in the endoplasmic reticulum in the form of heterodimer with protein prM. They play a role in virion budding in the ER, and the newly formed immature particle is covered with 60 spikes composed of heterodimer between precursor prM and envelope protein E. The virion is transported to the Golgi apparatus where the low pH causes dissociation of PrM-E heterodimers and formation of E homodimers. prM-E cleavage is inefficient, and many virions are only partially matured. These uncleaved prM would play a role in immune evasion. Its function is as follows. Involved in immune evasion, pathogenesis and viral replication. Once cleaved off the polyprotein, is targeted to three destinations: the viral replication cycle, the plasma membrane and the extracellular compartment. Essential for viral replication. Required for formation of the replication complex and recruitment of other non-structural proteins to the ER-derived membrane structures. Excreted as a hexameric lipoparticle that plays a role against host immune response. Antagonizing the complement function. Binds to the host macrophages and dendritic cells. Inhibits signal transduction originating from Toll-like receptor 3 (TLR3). In terms of biological role, component of the viral RNA replication complex that functions in virion assembly and antagonizes the host alpha/beta interferon antiviral response. Functionally, required cofactor for the serine protease function of NS3. May have membrane-destabilizing activity and form viroporins. Displays three enzymatic activities: serine protease, NTPase and RNA helicase. NS3 serine protease, in association with NS2B, performs its autocleavage and cleaves the polyprotein at dibasic sites in the cytoplasm: C-prM, NS2A-NS2B, NS2B-NS3, NS3-NS4A, NS4A-2K and NS4B-NS5. NS3 RNA helicase binds RNA and unwinds dsRNA in the 3' to 5' direction. Its function is as follows. Regulates the ATPase activity of the NS3 helicase activity. NS4A allows NS3 helicase to conserve energy during unwinding. In terms of biological role, functions as a signal peptide for NS4B and is required for the interferon antagonism activity of the latter. Functionally, induces the formation of ER-derived membrane vesicles where the viral replication takes place. Inhibits interferon (IFN)-induced host STAT1 phosphorylation and nuclear translocation, thereby preventing the establishment of cellular antiviral state by blocking the IFN-alpha/beta pathway. Inhibits STAT2 translocation in the nucleus after IFN-alpha treatment. Replicates the viral (+) and (-) RNA genome. Performs the capping of genomes in the cytoplasm. NS5 methylates viral RNA cap at guanine N-7 and ribose 2'-O positions. Besides its role in RNA genome replication, also prevents the establishment of cellular antiviral state by blocking the interferon-alpha/beta (IFN-alpha/beta) signaling pathway. Inhibits host TYK2 and STAT2 phosphorylation, thereby preventing activation of JAK-STAT signaling pathway. This is Genome polyprotein from Japanese encephalitis virus (strain M28) (JEV).